An 820-amino-acid chain; its full sequence is Ribosome biogenesis protein ERB1 (820 aa).

Residues 1 to 111 are disordered; it reads MVRSRSNSVK…SDAGDDEVDP (111 aa). Basic and acidic residues predominate over residues 9–19; that stretch reads VKKDLKRKVDE. Positions 20–48 are enriched in acidic residues; it reads PVDVQDEFDVEGLIDEGDSDDEDEAEQEV. Over residues 53–64 the composition is skewed to basic and acidic residues; it reads VTKDKKNTSKTE. The segment covering 65–110 has biased composition (acidic residues); the sequence is NEEDADDESDSDAELEALIGEEEDLSGSELEDELAYFSDAGDDEVD. Positions 282–395 are required for interaction with NOP7; it reads RFIPSKHEAK…LRHVPGYSES (114 aa). A required for interaction with YTM1 region spans residues 395-431; that stretch reads SVRERFERSLDLYLAPRVRKNKLNIDPDSLIPDLPSP. 2 WD repeats span residues 447–486 and 495–535; these read GHKG…ELYR and AQDD…FDIE. Residues 545-585 are disordered; the sequence is GWGFAEGGREQQDIDTKGLDDDADSDSDDETGHVKKKSPPA. Residues 551 to 564 show a composition bias toward basic and acidic residues; the sequence is GGREQQDIDTKGLD. WD repeat units follow at residues 604-646, 649-687, 690-729, 733-773, and 789-820; these read TATK…SQSP, KSKG…MAKK, PGAR…KPYK, YHEK…DMMT, and KSGL…LWTT.

It belongs to the WD repeat BOP1/ERB1 family. As to quaternary structure, component of the NOP7 complex, composed of ERB1, NOP7 and YTM1. The complex is held together by ERB1, which interacts with NOP7 via its N-terminal domain and with YTM1 via a high-affinity interaction between the seven-bladed beta-propeller domains of the 2 proteins. The NOP7 complex associates with the 66S pre-ribosome.

The protein resides in the nucleus. The protein localises to the nucleolus. It localises to the nucleoplasm. Component of the NOP7 complex, which is required for maturation of the 25S and 5.8S ribosomal RNAs and formation of the 60S ribosome. The protein is Ribosome biogenesis protein ERB1 of Yarrowia lipolytica (strain CLIB 122 / E 150) (Yeast).